Here is a 329-residue protein sequence, read N- to C-terminus: MDPEQNAWTRRHMLGMDGLARHEIGAILDSAQAFRDVNYREIKKVPTLRGKTVINLFYENSTRTRTSFELAGKRMSADVINISASSSSAAKGETLLDTVATLQAMRPDVVVLRHGDSGAPHFLARHLDAGIINAGDGQHEHPTQSLLDLLTIQDHLEEMGKSSFEGMNVAICGDVLHSRVARSNAFALRTLGANVRFVGPPTLMPSEATKVFGVTVHHNMEEGLRGVDVIIMLRLQLERMTSAYLPSVREYFAYWGLTRGRLELTQPHALVMHPGPINRGVEIASDVADNPNRSVILEQVANGLAVRMAVLYHLCTGAARNSAQLGESL.

Residues arginine 63 and threonine 64 each coordinate carbamoyl phosphate. Position 91 (lysine 91) interacts with L-aspartate. 3 residues coordinate carbamoyl phosphate: arginine 113, histidine 141, and glutamine 144. Residues arginine 179 and arginine 234 each coordinate L-aspartate. Positions 275 and 276 each coordinate carbamoyl phosphate.

This sequence belongs to the aspartate/ornithine carbamoyltransferase superfamily. ATCase family. As to quaternary structure, heterododecamer (2C3:3R2) of six catalytic PyrB chains organized as two trimers (C3), and six regulatory PyrI chains organized as three dimers (R2).

The catalysed reaction is carbamoyl phosphate + L-aspartate = N-carbamoyl-L-aspartate + phosphate + H(+). It participates in pyrimidine metabolism; UMP biosynthesis via de novo pathway; (S)-dihydroorotate from bicarbonate: step 2/3. In terms of biological role, catalyzes the condensation of carbamoyl phosphate and aspartate to form carbamoyl aspartate and inorganic phosphate, the committed step in the de novo pyrimidine nucleotide biosynthesis pathway. The chain is Aspartate carbamoyltransferase catalytic subunit from Magnetococcus marinus (strain ATCC BAA-1437 / JCM 17883 / MC-1).